Consider the following 99-residue polypeptide: Integration host factor subunit alpha (99 aa).

The protein belongs to the bacterial histone-like protein family. Heterodimer of an alpha and a beta chain.

Functionally, this protein is one of the two subunits of integration host factor, a specific DNA-binding protein that functions in genetic recombination as well as in transcriptional and translational control. The polypeptide is Integration host factor subunit alpha (Nitrosococcus oceani (strain ATCC 19707 / BCRC 17464 / JCM 30415 / NCIMB 11848 / C-107)).